A 182-amino-acid polypeptide reads, in one-letter code: Protein Syd (182 aa).

It belongs to the Syd family.

It is found in the cell inner membrane. Functionally, interacts with the SecY protein in vivo. May bind preferentially to an uncomplexed state of SecY, thus functioning either as a chelating agent for excess SecY in the cell or as a regulatory factor that negatively controls the translocase function. The polypeptide is Protein Syd (Aliivibrio salmonicida (strain LFI1238) (Vibrio salmonicida (strain LFI1238))).